The following is a 91-amino-acid chain: Acylphosphatase (91 aa).

Residues C5 to R91 form the Acylphosphatase-like domain. Catalysis depends on residues R20 and N38.

Belongs to the acylphosphatase family.

The catalysed reaction is an acyl phosphate + H2O = a carboxylate + phosphate + H(+). The protein is Acylphosphatase (acyP) of Pseudomonas paraeruginosa (strain DSM 24068 / PA7) (Pseudomonas aeruginosa (strain PA7)).